A 324-amino-acid polypeptide reads, in one-letter code: Methyltransferase pytC (324 aa).

Positions 1-28 (MTVRTAAEPPNRIEVDMDAPSLDTDSSC) are disordered.

Belongs to the methyltransferase superfamily. LaeA methyltransferase family.

It participates in secondary metabolite biosynthesis. In terms of biological role, methyltransferase; part of the gene cluster that mediates the biosynthesis of pyranterreones, a family of antioxidative compounds. The first step of pyranonigrins biosynthesis is performed by the hybrid PKS-NRPS synthetase pytA that condenses 4 malonyl-CoA units ato the acetyl starter unit by the modular PKS of pytA. The acyl chain is then connected to an L-serine through the amide bond by the modular NRPS of pytA. A tetramic acid is formed and released from the PKS-NRPS pytA to give pyranterreone 5 with the help of the thioesterase pytI. Pyranterreone 5 could be methylated by pytC to afford pyranterreone 6. Both pyranterreones 5 and 6 are subsequently oxidized by the FAD-linked oxidoreductase pytB and the cytochrome P450 monooxygenase pytD to form the fused gamma-pyrone core, resulting in pyranterreones 7 and 11, respectively. The hydroxy group at C-8 of pyranterreones 7 and 11 are dehydrated by the aspartyl protease pytH to form a delta-7 double bond to give pyranterreones 3 and 1, 2 accordingly. The exo-methylene of pyranterreone 3 could be reduced into a pendant methyl by reductase pytE to provide pyranterreone 4, also known as cordylactam. Pyranterreone 4 can be reconverted to pyranterreone 3 through pytB-catalyzed dehydrogenation or further oxidized to pyranterreones 9 and 10. The polypeptide is Methyltransferase pytC (Aspergillus terreus).